We begin with the raw amino-acid sequence, 491 residues long: Ketol-acid reductoisomerase (NADP(+)) (491 aa).

The KARI N-terminal Rossmann domain maps to 15–208 (AQLGKCRFMG…GGHRAGVLES (194 aa)). NADP(+) is bound by residues 45–48 (CGAQ), R68, R76, S78, and 108–110 (DKQ). Residue H132 is part of the active site. An NADP(+)-binding site is contributed by G158. 2 consecutive KARI C-terminal knotted domains span residues 209 to 344 (SFVA…TAPQ) and 345 to 484 (YEGK…MTDM). Residues D217, E221, E389, and E393 each coordinate Mg(2+). A substrate-binding site is contributed by S414.

The protein belongs to the ketol-acid reductoisomerase family. Mg(2+) is required as a cofactor.

The catalysed reaction is (2R)-2,3-dihydroxy-3-methylbutanoate + NADP(+) = (2S)-2-acetolactate + NADPH + H(+). It catalyses the reaction (2R,3R)-2,3-dihydroxy-3-methylpentanoate + NADP(+) = (S)-2-ethyl-2-hydroxy-3-oxobutanoate + NADPH + H(+). The protein operates within amino-acid biosynthesis; L-isoleucine biosynthesis; L-isoleucine from 2-oxobutanoate: step 2/4. It functions in the pathway amino-acid biosynthesis; L-valine biosynthesis; L-valine from pyruvate: step 2/4. Involved in the biosynthesis of branched-chain amino acids (BCAA). Catalyzes an alkyl-migration followed by a ketol-acid reduction of (S)-2-acetolactate (S2AL) to yield (R)-2,3-dihydroxy-isovalerate. In the isomerase reaction, S2AL is rearranged via a Mg-dependent methyl migration to produce 3-hydroxy-3-methyl-2-ketobutyrate (HMKB). In the reductase reaction, this 2-ketoacid undergoes a metal-dependent reduction by NADPH to yield (R)-2,3-dihydroxy-isovalerate. The polypeptide is Ketol-acid reductoisomerase (NADP(+)) (Shigella flexneri).